The chain runs to 950 residues: Leucine--tRNA ligase (950 aa).

Residues 72–83 carry the 'HIGH' region motif; that stretch reads PYPSGEGLHVGH. A 'KMSKS' region motif is present at residues 722–726; it reads KIGKS. Residue K725 participates in ATP binding.

The protein belongs to the class-I aminoacyl-tRNA synthetase family.

It is found in the cytoplasm. It catalyses the reaction tRNA(Leu) + L-leucine + ATP = L-leucyl-tRNA(Leu) + AMP + diphosphate. In Mycobacterium sp. (strain KMS), this protein is Leucine--tRNA ligase.